Reading from the N-terminus, the 185-residue chain is Large ribosomal subunit protein uL5 (185 aa).

Belongs to the universal ribosomal protein uL5 family. Part of the 50S ribosomal subunit; part of the 5S rRNA/L5/L18/L25 subcomplex. Contacts the 5S rRNA and the P site tRNA. Forms a bridge to the 30S subunit in the 70S ribosome.

Its function is as follows. This is one of the proteins that bind and probably mediate the attachment of the 5S RNA into the large ribosomal subunit, where it forms part of the central protuberance. In the 70S ribosome it contacts protein S13 of the 30S subunit (bridge B1b), connecting the 2 subunits; this bridge is implicated in subunit movement. Contacts the P site tRNA; the 5S rRNA and some of its associated proteins might help stabilize positioning of ribosome-bound tRNAs. The protein is Large ribosomal subunit protein uL5 of Rhizobium leguminosarum bv. trifolii (strain WSM2304).